The following is a 335-amino-acid chain: 3-isopropylmalate dehydrogenase (335 aa).

Substrate contacts are provided by arginine 87, arginine 97, arginine 121, and aspartate 211. Positions 211, 235, and 239 each coordinate Mg(2+). Residue 271-283 (GSAPDIAGQSKAD) coordinates NAD(+).

This sequence belongs to the isocitrate and isopropylmalate dehydrogenases family. LeuB type 2 subfamily. In terms of assembly, homodimer. Requires Mg(2+) as cofactor. Mn(2+) is required as a cofactor.

It localises to the cytoplasm. The enzyme catalyses (2R,3S)-3-isopropylmalate + NAD(+) = 4-methyl-2-oxopentanoate + CO2 + NADH. Its pathway is amino-acid biosynthesis; L-leucine biosynthesis; L-leucine from 3-methyl-2-oxobutanoate: step 3/4. Its function is as follows. Catalyzes the oxidation of 3-carboxy-2-hydroxy-4-methylpentanoate (3-isopropylmalate) to 3-carboxy-4-methyl-2-oxopentanoate. The product decarboxylates to 4-methyl-2 oxopentanoate. The sequence is that of 3-isopropylmalate dehydrogenase from Nocardia farcinica (strain IFM 10152).